Here is a 125-residue protein sequence, read N- to C-terminus: Small ribosomal subunit protein uS13 (125 aa).

The segment at 92–125 (RRSLPVRGQRTQTNARTRKGKRKTVAGKKKATKK) is disordered. Basic residues predominate over residues 107-125 (RTRKGKRKTVAGKKKATKK).

The protein belongs to the universal ribosomal protein uS13 family. Part of the 30S ribosomal subunit. Forms a loose heterodimer with protein S19. Forms two bridges to the 50S subunit in the 70S ribosome.

Its function is as follows. Located at the top of the head of the 30S subunit, it contacts several helices of the 16S rRNA. In the 70S ribosome it contacts the 23S rRNA (bridge B1a) and protein L5 of the 50S subunit (bridge B1b), connecting the 2 subunits; these bridges are implicated in subunit movement. Contacts the tRNAs in the A and P-sites. This Chlorobium limicola (strain DSM 245 / NBRC 103803 / 6330) protein is Small ribosomal subunit protein uS13.